The chain runs to 242 residues: ATP synthase subunit a (242 aa).

6 helical membrane passes run 29 to 49 (SSIYMLLASILALTYFYLAFY), 84 to 104 (FIPLVFSLFIFILFCNLLGMT), 114 to 134 (IIVTFTLAILVFLTVTIVGFV), 140 to 160 (FLTLFLPHGTPLWLAPLMIVI), 189 to 209 (VIAGFTVSLMIYLKFLPIPLM), and 210 to 230 (MILIGFEIFVAILQAYIFTIL).

It belongs to the ATPase A chain family. In terms of assembly, F-type ATPases have 2 components, CF(1) - the catalytic core - and CF(0) - the membrane proton channel. CF(1) has five subunits: alpha(3), beta(3), gamma(1), delta(1), epsilon(1). CF(0) has three main subunits: a(1), b(2) and c(9-12). The alpha and beta chains form an alternating ring which encloses part of the gamma chain. CF(1) is attached to CF(0) by a central stalk formed by the gamma and epsilon chains, while a peripheral stalk is formed by the delta and b chains.

The protein localises to the cell inner membrane. Key component of the proton channel; it plays a direct role in the translocation of protons across the membrane. This is ATP synthase subunit a from Rickettsia massiliae (strain Mtu5).